The primary structure comprises 358 residues: 3'(2'),5'-bisphosphate nucleotidase (358 aa).

D52 acts as the Proton acceptor in catalysis. Residues E78, D140, I142, and D143 each contribute to the Mg(2+) site. Residue T145 is the Proton acceptor of the active site. Adenosine 3',5'-bisphosphate is bound by residues T145, H239, S263, K266, R280, and D292. 5 residues coordinate AMP: H239, S263, K266, R280, and D292. Residue D292 participates in Mg(2+) binding.

This sequence belongs to the inositol monophosphatase superfamily. Mg(2+) serves as cofactor. Is constitutively transcribed in both roots and shoots.

The enzyme catalyses 3'-phosphoadenylyl sulfate + H2O = adenosine 5'-phosphosulfate + phosphate. It carries out the reaction adenosine 3',5'-bisphosphate + H2O = AMP + phosphate. It catalyses the reaction adenosine 2',5'-bisphosphate + H2O = AMP + phosphate. With respect to regulation, inhibited by Ca(2+), Li(+), and Na(+) and activated by K(+). In terms of biological role, phosphatase that converts adenosine 3'-phosphate 5'-phosphosulfate (PAPS) to adenosine 5'-phosphosulfate (APS) and 3'(2')-phosphoadenosine 5'-phosphate (PAP) to AMP. May regulate the flux of sulfur in the sulfur-activation pathway by converting PAPS to APS. Shows no activity on myo-inositol 1-phosphate, beta-glycerol phosphate, NADPH, NADP and 5'-AMP. This chain is 3'(2'),5'-bisphosphate nucleotidase, found in Oryza sativa (Rice).